We begin with the raw amino-acid sequence, 81 residues long: Dermaseptin-B7 (81 aa).

An N-terminal signal peptide occupies residues 1-22 (MASLKKSLFLVLFLGLVSLSIC). The propeptide occupies 23–44 (EEEKRENEDEEEQEDDEQSEMK). The tract at residues 24 to 48 (EEKRENEDEEEQEDDEQSEMKRGLW) is disordered. Residues 30 to 40 (EDEEEQEDDEQ) are compositionally biased toward acidic residues. Valine amide is present on V78. Positions 80–81 (EQ) are excised as a propeptide.

This sequence belongs to the frog skin active peptide (FSAP) family. Dermaseptin subfamily. As to expression, expressed by the skin glands.

It is found in the secreted. Its function is as follows. Has antimicrobial activity. The polypeptide is Dermaseptin-B7 (DRG1) (Phyllomedusa bicolor (Two-colored leaf frog)).